A 496-amino-acid chain; its full sequence is Cyclin-dependent kinase 16 (496 aa).

Residues 1–95 (MDRMKKIKRQ…SATSSDEVQS (95 aa)) form a disordered region. S12 carries the post-translational modification Phosphoserine; by BRSK2. Phosphoserine occurs at positions 36, 42, 64, 65, 78, 82, and 89. Residues 69–78 (IVHEDMKMGS) are compositionally biased toward basic and acidic residues. The segment covering 83 to 93 (DQASATSSDEV) has biased composition (polar residues). At S95 the chain carries Phosphoserine; by CDK5. Residues S110, S119, S138, S146, S153, and S155 each carry the phosphoserine modification. In terms of domain architecture, Protein kinase spans 165–446 (YIKLDKLGEG…AEDARKHPFF (282 aa)). ATP is bound by residues 171–179 (LGEGTYATV) and K194. A Phosphothreonine modification is found at T175. Catalysis depends on D286, which acts as the Proton acceptor. T380 bears the Phosphothreonine mark. Phosphoserine occurs at positions 391, 478, and 480.

It belongs to the protein kinase superfamily. CMGC Ser/Thr protein kinase family. CDC2/CDKX subfamily. As to quaternary structure, found in a complex containing CABLES1, CDK17 and TDRD7. Interacts with BRSK2. Identified in a complex with NSF, syntaxin-1, synaptotagmin, SYN1, SYP and CDK5R1. Interacts with YWHAH, YWHAQ and YWHAZ. Interacts with CCNY; this interaction increases the CDK16 kinase activity. Interacts with CCNYL1; this interaction mutually increases the stability of CDK16 and CCNYL1 and increases the kinase activity of CDK16. Interacts with NSF. Phosphorylation of CDK16 is essential for the binding of CCNY, but also essential for the regulation of CDK16 kinase activity. Phosphorylation of CDK16 is essential for the binding of CCNYl1, but also essential for the regulation of CDK16 kinase activity. Ser-146 and Ser-153 are the critical sites for the binding of CCNYL1 and for modulating CDK16 kinase activity. Phosphorylation at Ser-153 inhibits kinase activity. As to expression, highly expressed in testis and brain, and detected at lower levels in heart, skeletal muscle, adipose tissue, lung, spleen and pancreas (at protein level). Ubiquitous with highest levels in testis and brain, with longer form predominant in all tissues except the testis.

It localises to the cytoplasm. It is found in the cytoplasmic vesicle. Its subcellular location is the secretory vesicle. The protein localises to the cell membrane. The protein resides in the synapse. It localises to the synaptosome. The enzyme catalyses L-seryl-[protein] + ATP = O-phospho-L-seryl-[protein] + ADP + H(+). It catalyses the reaction L-threonyl-[protein] + ATP = O-phospho-L-threonyl-[protein] + ADP + H(+). Protein kinase that plays a role in vesicle-mediated transport processes and exocytosis. Can phosphorylate CCNY at 'Ser-336' (in vitro). Plays a role in the regulation of insulin secretion in response to changes in blood glucose levels. Regulates GH1 release by brain neurons. Phosphorylates NSF, and thereby regulates NSF oligomerization. Required for normal spermatogenesis. Regulates neuron differentiation and dendrite development. This chain is Cyclin-dependent kinase 16 (Cdk16), found in Mus musculus (Mouse).